The following is a 76-amino-acid chain: Small ribosomal subunit protein bS18 (76 aa).

It belongs to the bacterial ribosomal protein bS18 family. In terms of assembly, part of the 30S ribosomal subunit. Forms a tight heterodimer with protein bS6.

Its function is as follows. Binds as a heterodimer with protein bS6 to the central domain of the 16S rRNA, where it helps stabilize the platform of the 30S subunit. The protein is Small ribosomal subunit protein bS18 of Oceanobacillus iheyensis (strain DSM 14371 / CIP 107618 / JCM 11309 / KCTC 3954 / HTE831).